Here is a 670-residue protein sequence, read N- to C-terminus: Probable Rho-GTPase-activating protein 9 (670 aa).

In terms of domain architecture, F-BAR spans 3 to 392 (DGFSNSFWSR…SFKNLDSLRD (390 aa)). The segment at 141 to 161 (NSKKSNLTDRKPIPTSRKSNK) is disordered. The 198-residue stretch at 425 to 622 (SSLTEDNLIV…DLINEFENLF (198 aa)) folds into the Rho-GAP domain. At threonine 640 the chain carries Phosphothreonine. Positions 641–663 (PITTSPQKLKLPRSSSPCKNPSP) are enriched in polar residues. The disordered stretch occupies residues 641–670 (PITTSPQKLKLPRSSSPCKNPSPTRRFRPF). Phosphoserine is present on serine 645.

It is found in the cytoplasm. This is Probable Rho-GTPase-activating protein 9 (rga9) from Schizosaccharomyces pombe (strain 972 / ATCC 24843) (Fission yeast).